A 131-amino-acid chain; its full sequence is Modulator protein MzrA (131 aa).

Topologically, residues 1-14 (MSIRWLFPKLTPRK) are cytoplasmic. Residues 15 to 31 (VARILILLALPIIALTQ) form a helical membrane-spanning segment. Residues 32-131 (SQSLRHSQDD…KLTQKQSKLG (100 aa)) lie on the Periplasmic side of the membrane.

Belongs to the MzrA family. Interacts with EnvZ.

The protein localises to the cell inner membrane. Functionally, modulates the activity of the EnvZ/OmpR two-component regulatory system, probably by directly modulating EnvZ enzymatic activity and increasing stability of phosphorylated OmpR. The polypeptide is Modulator protein MzrA (Pectobacterium carotovorum subsp. carotovorum (strain PC1)).